The primary structure comprises 354 residues: uncharacterized protein (354 aa).

The first 21 residues, 1-21 (MFQKKTYAVFLILLLMMFTAA), serve as a signal peptide directing secretion. Cys-22 carries the N-palmitoyl cysteine lipid modification. Residue Cys-22 is the site of S-diacylglycerol cysteine attachment.

Its subcellular location is the cell membrane. The protein localises to the membrane raft. This is an uncharacterized protein from Bacillus subtilis (strain 168).